Reading from the N-terminus, the 347-residue chain is Ribosomal RNA small subunit methyltransferase H (347 aa).

Residues 47-49 (GGY), Asp-64, Phe-91, Asp-114, and Gln-121 each bind S-adenosyl-L-methionine. Residues 291 to 347 (PAVKGAVGPTAEEEERNPRARSAKLRAGIRTENPPLEDDLSLFGLPKLPETNELARS) are disordered.

It belongs to the methyltransferase superfamily. RsmH family.

The protein localises to the cytoplasm. It catalyses the reaction cytidine(1402) in 16S rRNA + S-adenosyl-L-methionine = N(4)-methylcytidine(1402) in 16S rRNA + S-adenosyl-L-homocysteine + H(+). Its function is as follows. Specifically methylates the N4 position of cytidine in position 1402 (C1402) of 16S rRNA. The sequence is that of Ribosomal RNA small subunit methyltransferase H from Brucella anthropi (strain ATCC 49188 / DSM 6882 / CCUG 24695 / JCM 21032 / LMG 3331 / NBRC 15819 / NCTC 12168 / Alc 37) (Ochrobactrum anthropi).